A 388-amino-acid polypeptide reads, in one-letter code: MKHLHRFFSSDASGGIILIIAAVLAMIMANSGATSGWYHDFLETPVQLRVGTLEINKNMLLWINDALMAVFFLLVGLEVKRELMQGSLASLRQAAFPVIAAIGGMIVPALLYLAFNYADPITREGWAIPAATDIAFALGVLALLGSRVPLALKIFLMALAIIDDLGAIIIIALFYTNDLSMASLGVAAVAIAVLVVLNLCGVRRTGVYILVGVVLWTAVLKSGVHATLAGVIVGFFIPLKEKHGRSPAKRLEHVLHPWVAYLILPLFAFANAGVSLQGVTLEGLTSILPLGIIAGLLIGKPLGISLFCWLALRLKLAHLPEGTTYQQIMAVGILCGIGFTMSIFIASLAFGSVDPELINWAKLGILVGSISSAVIGYSWLRVRLRPSV.

The Cytoplasmic portion of the chain corresponds to 1 to 11; it reads MKHLHRFFSSD. The helical transmembrane segment at 12–31 threads the bilayer; sequence ASGGIILIIAAVLAMIMANS. Over 32–58 the chain is Periplasmic; that stretch reads GATSGWYHDFLETPVQLRVGTLEINKN. The chain crosses the membrane as a helical span at residues 59 to 80; that stretch reads MLLWINDALMAVFFLLVGLEVK. Topologically, residues 81 to 96 are cytoplasmic; the sequence is RELMQGSLASLRQAAF. The chain crosses the membrane as a helical span at residues 97 to 116; that stretch reads PVIAAIGGMIVPALLYLAFN. Topologically, residues 117–122 are periplasmic; the sequence is YADPIT. Residues 123–130 traverse the membrane as a helical segment; sequence REGWAIPA. Residues 131-154 lie on the Cytoplasmic side of the membrane; that stretch reads ATDIAFALGVLALLGSRVPLALKI. The helical transmembrane segment at 155–176 threads the bilayer; it reads FLMALAIIDDLGAIIIIALFYT. At 177–180 the chain is on the periplasmic side; the sequence is NDLS. Residues 181–200 form a helical membrane-spanning segment; that stretch reads MASLGVAAVAIAVLVVLNLC. Residues 201–204 are Cytoplasmic-facing; that stretch reads GVRR. The helical transmembrane segment at 205 to 222 threads the bilayer; it reads TGVYILVGVVLWTAVLKS. A topological domain (periplasmic) is located at residue glycine 223. The chain crosses the membrane as a helical span at residues 224-236; it reads VHATLAGVIVGFF. The Cytoplasmic portion of the chain corresponds to 237-253; that stretch reads IPLKEKHGRSPAKRLEH. The chain crosses the membrane as a helical span at residues 254–272; that stretch reads VLHPWVAYLILPLFAFANA. Topologically, residues 273–286 are periplasmic; the sequence is GVSLQGVTLEGLTS. A helical membrane pass occupies residues 287-310; sequence ILPLGIIAGLLIGKPLGISLFCWL. The Cytoplasmic segment spans residues 311 to 339; that stretch reads ALRLKLAHLPEGTTYQQIMAVGILCGIGF. A helical membrane pass occupies residues 340–350; the sequence is TMSIFIASLAF. Residues 351 to 357 lie on the Periplasmic side of the membrane; it reads GSVDPEL. The helical transmembrane segment at 358–380 threads the bilayer; that stretch reads INWAKLGILVGSISSAVIGYSWL. Over 381-388 the chain is Cytoplasmic; that stretch reads RVRLRPSV.

The protein belongs to the NhaA Na(+)/H(+) (TC 2.A.33) antiporter family.

It localises to the cell inner membrane. It carries out the reaction Na(+)(in) + 2 H(+)(out) = Na(+)(out) + 2 H(+)(in). Its function is as follows. Na(+)/H(+) antiporter that extrudes sodium in exchange for external protons. The chain is Na(+)/H(+) antiporter NhaA from Escherichia coli O1:K1 / APEC.